We begin with the raw amino-acid sequence, 61 residues long: Alpha-conotoxin-like PnMGMR-02 (61 aa).

Positions 1–21 are cleaved as a signal peptide; sequence MGMRMMFTVFLLVVLATTVVS. Residues 22–44 constitute a propeptide that is removed on maturation; sequence FTSDRASDGGNAAASDLIALTIK. Intrachain disulfides connect Cys46/Cys52 and Cys47/Cys60. The segment at 48–50 is ser-Xaa-Pro motif, crucial for potent interaction with nAChR; that stretch reads SRP. At Cys60 the chain carries Cysteine amide.

It belongs to the conotoxin A superfamily. As to expression, expressed by the venom duct.

The protein localises to the secreted. In terms of biological role, alpha-conotoxins act on postsynaptic membranes, they bind to the nicotinic acetylcholine receptors (nAChR) and thus inhibit them. This toxin blocks mammalian nAChRs (alpha-7 &gt; alpha-3/beta-2). This is Alpha-conotoxin-like PnMGMR-02 from Conus pennaceus (Feathered cone).